Consider the following 545-residue polypeptide: CTP synthase (545 aa).

Positions 1-266 are amidoligase domain; it reads MTTNYIFVTG…DDYICKRFSL (266 aa). Residue Ser-14 coordinates CTP. Ser-14 lines the UTP pocket. Residues 15–20 and Asp-72 contribute to the ATP site; that span reads SLGKGI. Mg(2+) contacts are provided by Asp-72 and Glu-140. CTP-binding positions include 147 to 149, 187 to 192, and Lys-223; these read DIE and KTKPTQ. Residues 187–192 and Lys-223 each bind UTP; that span reads KTKPTQ. 239-241 is an ATP binding site; it reads KDV. The Glutamine amidotransferase type-1 domain occupies 291–542; sequence TIGMVGKYIE…VKAANEHQKR (252 aa). Gly-352 is a binding site for L-glutamine. The active-site Nucleophile; for glutamine hydrolysis is Cys-379. L-glutamine-binding positions include 380 to 383, Glu-403, and Arg-470; that span reads LGMQ. Residues His-515 and Glu-517 contribute to the active site.

It belongs to the CTP synthase family. As to quaternary structure, homotetramer.

The enzyme catalyses UTP + L-glutamine + ATP + H2O = CTP + L-glutamate + ADP + phosphate + 2 H(+). It catalyses the reaction L-glutamine + H2O = L-glutamate + NH4(+). It carries out the reaction UTP + NH4(+) + ATP = CTP + ADP + phosphate + 2 H(+). It participates in pyrimidine metabolism; CTP biosynthesis via de novo pathway; CTP from UDP: step 2/2. Allosterically activated by GTP, when glutamine is the substrate; GTP has no effect on the reaction when ammonia is the substrate. The allosteric effector GTP functions by stabilizing the protein conformation that binds the tetrahedral intermediate(s) formed during glutamine hydrolysis. Inhibited by the product CTP, via allosteric rather than competitive inhibition. Its function is as follows. Catalyzes the ATP-dependent amination of UTP to CTP with either L-glutamine or ammonia as the source of nitrogen. Regulates intracellular CTP levels through interactions with the four ribonucleotide triphosphates. The sequence is that of CTP synthase from Salmonella newport (strain SL254).